Consider the following 847-residue polypeptide: Protein IRS1 (847 aa).

Disordered stretches follow at residues Met-1 to His-82, Trp-607 to Pro-627, and Gln-715 to His-847. A compositionally biased stretch (gly residues) spans Arg-16 to Gly-25. Low complexity predominate over residues Val-26–Gly-56. Residues Glu-723 to Tyr-733 show a composition bias toward acidic residues. Positions Arg-833–His-847 are enriched in basic residues.

This sequence belongs to the herpesviridae US22 family. As to quaternary structure, interacts (via N-terminus) with the viral DNA polymerase accessory subunit UL44. Interacts (via C-terminus) with host EIF2AK2.

The protein localises to the virion. It localises to the host cytoplasm. The protein resides in the host nucleus. Functionally, acts as a transactivator along with IE2, and is required for oriLyt-dependent DNA replication in the transient transfection replication assay using native promoters. The polypeptide is Protein IRS1 (IRS1) (Human cytomegalovirus (strain Merlin) (HHV-5)).